The following is a 254-amino-acid chain: MNIFSFYIINNDAPEPWQICYQDSATKIMSGIDKLTGEIFYYETLLLIIVGWVLISAIIKYTKTELSYKYFNHGTLIEILWTCSPAFILIAISFPSFKLLYLMDSIIDSQITIKVLGHQWYWSYEYSDYLDNSGDSISFDSIMIPTDDLEPGQFRLLEVDNRIVLPIHTHIRFICTSSDVIHSFAVPSLGLKIDALPGRLNGISTYVEREGTFYGQCSELCGVYHFGMPIVIEAVRIEKYLEWLNIHLDNTPSS.

Residues 12–38 (DAPEPWQICYQDSATKIMSGIDKLTGE) are Mitochondrial intermembrane-facing. The helical transmembrane segment at 39–59 (IFYYETLLLIIVGWVLISAII) threads the bilayer. At 60-73 (KYTKTELSYKYFNH) the chain is on the mitochondrial matrix side. Residues 74-94 (GTLIEILWTCSPAFILIAISF) form a helical membrane-spanning segment. Topologically, residues 95–248 (PSFKLLYLMD…KYLEWLNIHL (154 aa)) are mitochondrial intermembrane. 6 residues coordinate Cu cation: His182, Cys217, Glu219, Cys221, His225, and Met228. A Mg(2+)-binding site is contributed by Glu219.

The protein belongs to the cytochrome c oxidase subunit 2 family. Component of the cytochrome c oxidase (complex IV, CIV), a multisubunit enzyme composed of a catalytic core of 3 subunits and several supernumerary subunits. The complex exists as a monomer or a dimer and forms supercomplexes (SCs) in the inner mitochondrial membrane with ubiquinol-cytochrome c oxidoreductase (cytochrome b-c1 complex, complex III, CIII). Cu cation is required as a cofactor.

It is found in the mitochondrion inner membrane. It catalyses the reaction 4 Fe(II)-[cytochrome c] + O2 + 8 H(+)(in) = 4 Fe(III)-[cytochrome c] + 2 H2O + 4 H(+)(out). Component of the cytochrome c oxidase, the last enzyme in the mitochondrial electron transport chain which drives oxidative phosphorylation. The respiratory chain contains 3 multisubunit complexes succinate dehydrogenase (complex II, CII), ubiquinol-cytochrome c oxidoreductase (cytochrome b-c1 complex, complex III, CIII) and cytochrome c oxidase (complex IV, CIV), that cooperate to transfer electrons derived from NADH and succinate to molecular oxygen, creating an electrochemical gradient over the inner membrane that drives transmembrane transport and the ATP synthase. Cytochrome c oxidase is the component of the respiratory chain that catalyzes the reduction of oxygen to water. Electrons originating from reduced cytochrome c in the intermembrane space (IMS) are transferred via the dinuclear copper A center (CU(A)) of subunit 2 and heme A of subunit 1 to the active site in subunit 1, a binuclear center (BNC) formed by heme A3 and copper B (CU(B)). The BNC reduces molecular oxygen to 2 water molecules using 4 electrons from cytochrome c in the IMS and 4 protons from the mitochondrial matrix. The protein is Cytochrome c oxidase subunit 2 of Zancudomyces culisetae (Gut fungus).